The primary structure comprises 139 residues: DNA-directed RNA polymerase II subunit Rpb4 (139 aa).

It belongs to the eukaryotic RPB4 RNA polymerase subunit family. In terms of assembly, RNA polymerase II consists of 12 different subunits.

It localises to the nucleus. Its subcellular location is the chromosome. Its function is as follows. DNA-dependent RNA polymerase catalyzes the transcription of DNA into RNA using the four ribonucleoside triphosphates as substrates. Associates with POLR2G. The chain is DNA-directed RNA polymerase II subunit Rpb4 from Drosophila melanogaster (Fruit fly).